An 821-amino-acid polypeptide reads, in one-letter code: DNA ligase (821 aa).

NAD(+) contacts are provided by residues 50–54 (DAEYD), 99–100 (SL), and Glu-140. Catalysis depends on Lys-142, which acts as the N6-AMP-lysine intermediate. NAD(+) contacts are provided by Arg-163, Glu-200, Lys-319, and Lys-343. 4 residues coordinate Zn(2+): Cys-452, Cys-455, Cys-470, and Cys-476. In terms of domain architecture, BRCT spans 742 to 821 (AAALPLEGKT…AGLQALLAGN (80 aa)).

This sequence belongs to the NAD-dependent DNA ligase family. LigA subfamily. Mg(2+) is required as a cofactor. Requires Mn(2+) as cofactor.

The enzyme catalyses NAD(+) + (deoxyribonucleotide)n-3'-hydroxyl + 5'-phospho-(deoxyribonucleotide)m = (deoxyribonucleotide)n+m + AMP + beta-nicotinamide D-nucleotide.. Functionally, DNA ligase that catalyzes the formation of phosphodiester linkages between 5'-phosphoryl and 3'-hydroxyl groups in double-stranded DNA using NAD as a coenzyme and as the energy source for the reaction. It is essential for DNA replication and repair of damaged DNA. This is DNA ligase from Chromobacterium violaceum (strain ATCC 12472 / DSM 30191 / JCM 1249 / CCUG 213 / NBRC 12614 / NCIMB 9131 / NCTC 9757 / MK).